We begin with the raw amino-acid sequence, 203 residues long: Small ribosomal subunit protein uS4 (203 aa).

The tract at residues 15-46 (LGENIWGRPKSSVNRRSYGPGQHGQRRKSKVS) is disordered. The region spanning 94 to 154 (QRLDMVVYRA…KKAKEMALIA (61 aa)) is the S4 RNA-binding domain.

This sequence belongs to the universal ribosomal protein uS4 family. Part of the 30S ribosomal subunit. Contacts protein S5. The interaction surface between S4 and S5 is involved in control of translational fidelity.

In terms of biological role, one of the primary rRNA binding proteins, it binds directly to 16S rRNA where it nucleates assembly of the body of the 30S subunit. Functionally, with S5 and S12 plays an important role in translational accuracy. The protein is Small ribosomal subunit protein uS4 of Novosphingobium aromaticivorans (strain ATCC 700278 / DSM 12444 / CCUG 56034 / CIP 105152 / NBRC 16084 / F199).